The sequence spans 413 residues: Histidinol-phosphate aminotransferase, chloroplastic (413 aa).

A chloroplast-targeting transit peptide spans 1–35; the sequence is MGVIELCNTSSICIGRANPSCCSIERNQRRRIICM. At Lys273 the chain carries N6-(pyridoxal phosphate)lysine.

Belongs to the class-II pyridoxal-phosphate-dependent aminotransferase family. Histidinol-phosphate aminotransferase subfamily. Homodimer. The cofactor is pyridoxal 5'-phosphate. Expressed in flowers, leaves, stems and roots.

Its subcellular location is the plastid. The protein localises to the chloroplast. The enzyme catalyses L-histidinol phosphate + 2-oxoglutarate = 3-(imidazol-4-yl)-2-oxopropyl phosphate + L-glutamate. It participates in amino-acid biosynthesis; L-histidine biosynthesis; L-histidine from 5-phospho-alpha-D-ribose 1-diphosphate: step 7/9. The chain is Histidinol-phosphate aminotransferase, chloroplastic (HPA) from Nicotiana plumbaginifolia (Leadwort-leaved tobacco).